The chain runs to 523 residues: Acetyl-CoA hydrolase (523 aa).

Residue 277 to 281 (GIGNI) participates in CoA binding. Residue Glu302 is the 5-glutamyl coenzyme A thioester intermediate of the active site. Residues Asn392 and Gly396 each contribute to the CoA site.

The protein belongs to the acetyl-CoA hydrolase/transferase family.

The protein resides in the cytoplasm. It catalyses the reaction acetyl-CoA + H2O = acetate + CoA + H(+). Its function is as follows. Presumably involved in regulating the intracellular acetyl-CoA pool for fatty acid and cholesterol synthesis and fatty acid oxidation. The sequence is that of Acetyl-CoA hydrolase (ACH1) from Eremothecium gossypii (strain ATCC 10895 / CBS 109.51 / FGSC 9923 / NRRL Y-1056) (Yeast).